The sequence spans 198 residues: Nucleoid occlusion factor SlmA (198 aa).

Residues 10 to 70 (NRREEILQSL…SLIEFIEDSL (61 aa)) enclose the HTH tetR-type domain. Positions 33–52 (TTAKLAASVGVSEAALYRHF) form a DNA-binding region, H-T-H motif. Residues 117 to 144 (EQDRLQGRINQLFERIEAQLRQVLREKR) are a coiled coil.

It belongs to the nucleoid occlusion factor SlmA family. In terms of assembly, homodimer. Interacts with FtsZ.

The protein resides in the cytoplasm. It localises to the nucleoid. Its function is as follows. Required for nucleoid occlusion (NO) phenomenon, which prevents Z-ring formation and cell division over the nucleoid. Acts as a DNA-associated cell division inhibitor that binds simultaneously chromosomal DNA and FtsZ, and disrupts the assembly of FtsZ polymers. SlmA-DNA-binding sequences (SBS) are dispersed on non-Ter regions of the chromosome, preventing FtsZ polymerization at these regions. This chain is Nucleoid occlusion factor SlmA, found in Salmonella agona (strain SL483).